A 451-amino-acid chain; its full sequence is tRNA modification GTPase MnmE (451 aa).

(6S)-5-formyl-5,6,7,8-tetrahydrofolate contacts are provided by R28, E85, and K124. A TrmE-type G domain is found at 220 to 377 (GMNVVLVGQP…LRSELLRVAG (158 aa)). N230 provides a ligand contact to K(+). Residues 230-235 (NVGKSS), 249-255 (TDIAGTT), and 274-277 (DTAG) each bind GTP. S234 contacts Mg(2+). 3 residues coordinate K(+): T249, I251, and T254. Residue T255 coordinates Mg(2+). K451 contacts (6S)-5-formyl-5,6,7,8-tetrahydrofolate.

This sequence belongs to the TRAFAC class TrmE-Era-EngA-EngB-Septin-like GTPase superfamily. TrmE GTPase family. In terms of assembly, homodimer. Heterotetramer of two MnmE and two MnmG subunits. K(+) serves as cofactor.

It is found in the cytoplasm. Exhibits a very high intrinsic GTPase hydrolysis rate. Involved in the addition of a carboxymethylaminomethyl (cmnm) group at the wobble position (U34) of certain tRNAs, forming tRNA-cmnm(5)s(2)U34. This is tRNA modification GTPase MnmE from Aromatoleum aromaticum (strain DSM 19018 / LMG 30748 / EbN1) (Azoarcus sp. (strain EbN1)).